Consider the following 238-residue polypeptide: Pyridoxine 5'-phosphate synthase (238 aa).

N9 is a 3-amino-2-oxopropyl phosphate binding site. Residue 11-12 (DH) participates in 1-deoxy-D-xylulose 5-phosphate binding. R20 contributes to the 3-amino-2-oxopropyl phosphate binding site. The active-site Proton acceptor is H45. Residues R47 and H52 each contribute to the 1-deoxy-D-xylulose 5-phosphate site. E72 serves as the catalytic Proton acceptor. Residue T102 participates in 1-deoxy-D-xylulose 5-phosphate binding. The active-site Proton donor is the H189. 3-amino-2-oxopropyl phosphate is bound by residues G190 and 211–212 (GH).

This sequence belongs to the PNP synthase family. As to quaternary structure, homooctamer; tetramer of dimers.

It is found in the cytoplasm. It catalyses the reaction 3-amino-2-oxopropyl phosphate + 1-deoxy-D-xylulose 5-phosphate = pyridoxine 5'-phosphate + phosphate + 2 H2O + H(+). It functions in the pathway cofactor biosynthesis; pyridoxine 5'-phosphate biosynthesis; pyridoxine 5'-phosphate from D-erythrose 4-phosphate: step 5/5. In terms of biological role, catalyzes the complicated ring closure reaction between the two acyclic compounds 1-deoxy-D-xylulose-5-phosphate (DXP) and 3-amino-2-oxopropyl phosphate (1-amino-acetone-3-phosphate or AAP) to form pyridoxine 5'-phosphate (PNP) and inorganic phosphate. The sequence is that of Pyridoxine 5'-phosphate synthase from Ehrlichia canis (strain Jake).